The primary structure comprises 96 residues: UPF0298 protein LCA_1075 (96 aa).

It belongs to the UPF0298 family.

It is found in the cytoplasm. This is UPF0298 protein LCA_1075 from Latilactobacillus sakei subsp. sakei (strain 23K) (Lactobacillus sakei subsp. sakei).